A 340-amino-acid chain; its full sequence is Nuclear transcription factor Y subunit A-3 (340 aa).

A disordered region spans residues 43–116 (SLSLKVDSRP…KGFASNPKQG (74 aa)). A compositionally biased stretch (low complexity) spans 60-77 (QISFQDQDSSSTQSTGQS). The segment covering 78-103 (YTEVASSGDDNPSRQISFSAKSGSEI) has biased composition (polar residues). Residues 182-205 (FVNAKQYHAIMRRRQQRAKLEAQN) carry the Subunit association domain (SAD) motif. Residues 212–237 (KPYLHESRHVHALKRPRGSGGRFLNT) constitute a DNA-binding region (NFYA/HAP2-type).

It belongs to the NFYA/HAP2 subunit family. As to quaternary structure, heterotrimeric transcription factor composed of three components, NF-YA, NF-YB and NF-YC. NF-YB and NF-YC must interact and dimerize for NF-YA association and DNA binding. Ubiquitous.

Its subcellular location is the nucleus. Functionally, stimulates the transcription of various genes by recognizing and binding to a CCAAT motif in promoters. The sequence is that of Nuclear transcription factor Y subunit A-3 (NFYA3) from Arabidopsis thaliana (Mouse-ear cress).